The following is a 308-amino-acid chain: Putative integrase/recombinase y4qK (308 aa).

The region spanning Leu15 to Leu97 is the Core-binding (CB) domain. A Tyr recombinase domain is found at Lys115–Ser288. Active-site residues include Arg150, Lys175, His240, Arg243, and His266. Tyr275 (O-(3'-phospho-DNA)-tyrosine intermediate) is an active-site residue.

The protein belongs to the 'phage' integrase family.

In terms of biological role, may function as an integrase. This is Putative integrase/recombinase y4qK from Sinorhizobium fredii (strain NBRC 101917 / NGR234).